Consider the following 293-residue polypeptide: tRNA-cytidine(32) 2-sulfurtransferase (293 aa).

The PP-loop motif signature appears at 62–67 (SGGKDS). Positions 137, 140, and 228 each coordinate [4Fe-4S] cluster.

It belongs to the TtcA family. In terms of assembly, homodimer. Mg(2+) is required as a cofactor. Requires [4Fe-4S] cluster as cofactor.

Its subcellular location is the cytoplasm. The enzyme catalyses cytidine(32) in tRNA + S-sulfanyl-L-cysteinyl-[cysteine desulfurase] + AH2 + ATP = 2-thiocytidine(32) in tRNA + L-cysteinyl-[cysteine desulfurase] + A + AMP + diphosphate + H(+). It participates in tRNA modification. Catalyzes the ATP-dependent 2-thiolation of cytidine in position 32 of tRNA, to form 2-thiocytidine (s(2)C32). The sulfur atoms are provided by the cysteine/cysteine desulfurase (IscS) system. The chain is tRNA-cytidine(32) 2-sulfurtransferase from Brucella melitensis biotype 1 (strain ATCC 23456 / CCUG 17765 / NCTC 10094 / 16M).